The primary structure comprises 386 residues: Chorismate synthase (386 aa).

2 residues coordinate NADP(+): Arg-45 and Arg-51. FMN contacts are provided by residues 131–133 (RTS), 251–252 (QG), Ser-294, 309–313 (KPIPS), and Arg-335.

Belongs to the chorismate synthase family. As to quaternary structure, homotetramer. It depends on FMNH2 as a cofactor.

It catalyses the reaction 5-O-(1-carboxyvinyl)-3-phosphoshikimate = chorismate + phosphate. The protein operates within metabolic intermediate biosynthesis; chorismate biosynthesis; chorismate from D-erythrose 4-phosphate and phosphoenolpyruvate: step 7/7. Functionally, catalyzes the anti-1,4-elimination of the C-3 phosphate and the C-6 proR hydrogen from 5-enolpyruvylshikimate-3-phosphate (EPSP) to yield chorismate, which is the branch point compound that serves as the starting substrate for the three terminal pathways of aromatic amino acid biosynthesis. This reaction introduces a second double bond into the aromatic ring system. The protein is Chorismate synthase of Clostridium tetani (strain Massachusetts / E88).